A 177-amino-acid chain; its full sequence is Bifunctional protein PyrR (177 aa).

Residues 99–111 (VVLVDDVLFTGRT) carry the PRPP-binding motif.

The protein belongs to the purine/pyrimidine phosphoribosyltransferase family. PyrR subfamily.

It catalyses the reaction UMP + diphosphate = 5-phospho-alpha-D-ribose 1-diphosphate + uracil. In terms of biological role, regulates the transcription of the pyrimidine nucleotide (pyr) operon in response to exogenous pyrimidines. Functionally, also displays a weak uracil phosphoribosyltransferase activity which is not physiologically significant. This is Bifunctional protein PyrR from Geobacter sulfurreducens (strain ATCC 51573 / DSM 12127 / PCA).